The chain runs to 139 residues: Small ribosomal subunit protein uS11 (139 aa).

2 disordered regions span residues 1–33 and 118–139; these read MPPA…AAHI and GAIS…RRRV. The segment covering 14-23 has biased composition (basic residues); it reads KGQKTRRREK.

This sequence belongs to the universal ribosomal protein uS11 family. As to quaternary structure, part of the 30S ribosomal subunit. Interacts with proteins S7 and S18. Binds to IF-3.

Its function is as follows. Located on the platform of the 30S subunit, it bridges several disparate RNA helices of the 16S rRNA. Forms part of the Shine-Dalgarno cleft in the 70S ribosome. This chain is Small ribosomal subunit protein uS11, found in Mycobacterium tuberculosis (strain ATCC 25177 / H37Ra).